The following is a 382-amino-acid chain: Myb-like transcription factor (382 aa).

Myb-like domains follow at residues 1-57 (MPRS…RWSK), 58-108 (ITGA…QHCL), and 109-160 (DPSL…ITLF). The span at 194–210 (MSMDASEDGDDAEDDQT) shows a compositional bias: acidic residues. The segment at 194-240 (MSMDASEDGDDAEDDQTPDSYTSISTSSFDDILGGSSSSPSAADTMT) is disordered. Polar residues predominate over residues 211–240 (PDSYTSISTSSFDDILGGSSSSPSAADTMT).

The protein resides in the nucleus. Its function is as follows. Transcription factor; part of the gene cluster that mediates the biosynthesis of 1233A, a natural compound known as an inhibitor of HMG-CoA synthase in the mevalonate pathway and with antibacterial and antifungal activities. Involved in hygromycin B-induced transcriptional control of the cluster. The protein is Myb-like transcription factor of Fusarium sp.